We begin with the raw amino-acid sequence, 226 residues long: 2-C-methyl-D-erythritol 4-phosphate cytidylyltransferase (226 aa).

This sequence belongs to the IspD/TarI cytidylyltransferase family. IspD subfamily.

The enzyme catalyses 2-C-methyl-D-erythritol 4-phosphate + CTP + H(+) = 4-CDP-2-C-methyl-D-erythritol + diphosphate. It participates in isoprenoid biosynthesis; isopentenyl diphosphate biosynthesis via DXP pathway; isopentenyl diphosphate from 1-deoxy-D-xylulose 5-phosphate: step 2/6. Functionally, catalyzes the formation of 4-diphosphocytidyl-2-C-methyl-D-erythritol from CTP and 2-C-methyl-D-erythritol 4-phosphate (MEP). This chain is 2-C-methyl-D-erythritol 4-phosphate cytidylyltransferase, found in Haemophilus ducreyi (strain 35000HP / ATCC 700724).